Reading from the N-terminus, the 788-residue chain is Glycerol-3-phosphate acyltransferase (788 aa).

Residues 104–135 (LLPGRDPYHPNPRQQRRILRSDPQRARVMAGE) are disordered. Positions 271 to 276 (SHRSYI) match the HXXXXD motif motif.

It belongs to the GPAT/DAPAT family.

The protein localises to the cell membrane. The enzyme catalyses sn-glycerol 3-phosphate + an acyl-CoA = a 1-acyl-sn-glycero-3-phosphate + CoA. Its pathway is phospholipid metabolism; CDP-diacylglycerol biosynthesis; CDP-diacylglycerol from sn-glycerol 3-phosphate: step 1/3. The polypeptide is Glycerol-3-phosphate acyltransferase (Mycobacterium marinum (strain ATCC BAA-535 / M)).